We begin with the raw amino-acid sequence, 102 residues long: Antimicrobial peptide 1 (102 aa).

Positions 1–26 (MASTKLFFSVITVMMLIAMASEMVNG) are cleaved as a signal peptide. Cystine bridges form between cysteine 37–cysteine 90, cysteine 47–cysteine 102, and cysteine 49–cysteine 75.

Its subcellular location is the secreted. Antimicrobial peptide which inhibits the growth of a variety of fungi, oomycetes, Gram-positive bacterial phytopatogenes and S.cerevisiae in vitro. No activity against E.coli. The chain is Antimicrobial peptide 1 from Macadamia integrifolia (Macadamia nut).